The chain runs to 672 residues: MEHADADRTRVAPEIGSLHDEDAEADPARAREMERLQPWREQVTARGVVAAALIGFVFSVIVMKIALTTGLVPTLNISAALLAFLALRGWTRALERLGFSPRPFTRQENTVVQTCAVACYTIAFGGGFGSTLLGLNKRTYELAGNSPGNVPGSYKEPGIGWMVGLLLAISFAGNLSLIPLRKALVVDYKLTYPSGTATAVLINGFHTAQGDKNAKLQLHGFLKYFGLSLFWSFFQWFYTGGNACGFVQFPTFGLKAWKQSFFFDFSLTYVGAGMICSHLVNLSTLLGAVISWGIMWPLISKHKGDWYPANIPESSMTSLYGYKSFLCIALIMGDGLYHFVKVTGVTAKSLHNRFNRKSVSNTASEEGDMVSLDDLQRDEVFKRGTVPSWMAYSGYFLLSIIAVITIPIMFRQVKWYYVIIAYALGPVLGFANSYGAGLTDINMGYNYGKIALFVFAAWAGKDNGVIAGLVVGTLVKQLVLVSADLMHDLKTGHLTLTSPRSMLVGELIGTGIGCFIAPLTFMLFYRAFDIGNPDGYWKAPYALIYRNMAILGIEGISALPKHCLSLSVGFFAFAVLTNVARDALPARYKKLVPLPTAMAVPFLVGASFAIDMCVGSLVLFAWNKMNKKEAAFMVPAVASGLMCGDGIWTFPSSILALAKIKPPICMKFTPGS.

Residues 1–11 (MEHADADRTRV) show a composition bias toward basic and acidic residues. The interval 1-27 (MEHADADRTRVAPEIGSLHDEDAEADP) is disordered. A run of 14 helical transmembrane segments spans residues 47-67 (GVVA…KIAL), 70-90 (GLVP…LRGW), 115-135 (CAVA…LLGL), 158-178 (GIGW…LSLI), 218-238 (LHGF…QWFY), 279-299 (LVNL…WPLI), 325-345 (FLCI…VTGV), 390-410 (MAYS…PIMF), 418-438 (VIIA…GAGL), 450-470 (IALF…AGLV), 504-524 (VGEL…FMLF), 556-576 (ISAL…FAVL), 602-622 (FLVG…LFAW), and 630-650 (AAFM…IWTF).

The protein belongs to the YSL (TC 2.A.67.2) family. Expressed in root phloem and at low levels in the shoot companion cells.

The protein localises to the cell membrane. Functionally, involved in Fe(3+) uptake from the rhizosphere and phloem transport of iron. Plays an important role in iron homeostasis during the early stages of growth. Transports Fe(3+)-phytosiderophore, but not Fe(3+)- or Fe(2+)-nicotianamine. May not transport other chelated metals. In Oryza sativa subsp. japonica (Rice), this protein is Iron-phytosiderophore transporter YSL15 (YSL15).